A 387-amino-acid chain; its full sequence is uncharacterized protein (387 aa).

A helical membrane pass occupies residues F5–T25.

It belongs to the LicD transferase family.

The protein localises to the membrane. This is an uncharacterized protein from Caenorhabditis elegans.